The chain runs to 1078 residues: DNA-directed RNA polymerase subunit beta (1078 aa).

The protein belongs to the RNA polymerase beta chain family. The minimal PEP RNA polymerase found in etioplasts (PEP-B) is composed of four subunits: alpha, beta, beta', and beta''. Following differentiation into chloroplasts the PEP-A RNA polymerase in this organism has been shown to be composed of at least 13 subunits, including the PEP-B subunits. When a (nuclear-encoded) sigma factor is associated with the core the holoenzyme is formed, which can initiate transcription.

It localises to the plastid. The protein localises to the chloroplast. The enzyme catalyses RNA(n) + a ribonucleoside 5'-triphosphate = RNA(n+1) + diphosphate. Functionally, DNA-dependent RNA polymerase catalyzes the transcription of DNA into RNA using the four ribonucleoside triphosphates as substrates. The polypeptide is DNA-directed RNA polymerase subunit beta (rpoB) (Sinapis alba (White mustard)).